Consider the following 479-residue polypeptide: Aspartyl/glutamyl-tRNA(Asn/Gln) amidotransferase subunit B (479 aa).

The protein belongs to the GatB/GatE family. GatB subfamily. Heterotrimer of A, B and C subunits.

It carries out the reaction L-glutamyl-tRNA(Gln) + L-glutamine + ATP + H2O = L-glutaminyl-tRNA(Gln) + L-glutamate + ADP + phosphate + H(+). It catalyses the reaction L-aspartyl-tRNA(Asn) + L-glutamine + ATP + H2O = L-asparaginyl-tRNA(Asn) + L-glutamate + ADP + phosphate + 2 H(+). In terms of biological role, allows the formation of correctly charged Asn-tRNA(Asn) or Gln-tRNA(Gln) through the transamidation of misacylated Asp-tRNA(Asn) or Glu-tRNA(Gln) in organisms which lack either or both of asparaginyl-tRNA or glutaminyl-tRNA synthetases. The reaction takes place in the presence of glutamine and ATP through an activated phospho-Asp-tRNA(Asn) or phospho-Glu-tRNA(Gln). The sequence is that of Aspartyl/glutamyl-tRNA(Asn/Gln) amidotransferase subunit B from Mycoplasma capricolum subsp. capricolum (strain California kid / ATCC 27343 / NCTC 10154).